A 133-amino-acid chain; its full sequence is Small ribosomal subunit protein uS8c (133 aa).

It belongs to the universal ribosomal protein uS8 family. In terms of assembly, part of the 30S ribosomal subunit.

It localises to the plastid. Its subcellular location is the chloroplast. One of the primary rRNA binding proteins, it binds directly to 16S rRNA central domain where it helps coordinate assembly of the platform of the 30S subunit. This Mesostigma viride (Green alga) protein is Small ribosomal subunit protein uS8c (rps8).